The primary structure comprises 387 residues: Odorant receptor 19a (387 aa).

The Cytoplasmic portion of the chain corresponds to 1–40 (MDISKVDSTRALVNHWRIFRIMGIHPPGKRTFWGRHYTAY). Residues 41-61 (SMVWNVTFHICIWVSFSVNLL) traverse the membrane as a helical segment. The Extracellular segment spans residues 62–71 (QSNSLETFCE). A helical membrane pass occupies residues 72 to 92 (SLCVTMPHTLYMLKLINVRRM). Residues 93-127 (RGQMISSHWLLRLLDKRLGCDDERQIIMAGIERAE) lie on the Cytoplasmic side of the membrane. The chain crosses the membrane as a helical span at residues 128–148 (FIFRTIFRGLACTVVLGIIYI). The Extracellular segment spans residues 149–171 (SASSEPTLMYPTWIPWNWRDSTS). Residues 172 to 192 (AYLATAMLHTTALMANATLVL) form a helical membrane-spanning segment. The Cytoplasmic segment spans residues 193 to 254 (NLSSYPGTYL…LRLFKSLERS (62 aa)). Residues 255–275 (LSMTCFLQFFSTACAQCTICY) traverse the membrane as a helical segment. Topologically, residues 276–285 (FLLFGNVGIM) are extracellular. Residues 286–306 (RFMNMLFLLVILTTETLLLCY) form a helical membrane-spanning segment. Residues 307–336 (TAELPCKEGESLLTAVYSCNWLSQSVNFRR) lie on the Cytoplasmic side of the membrane. A helical transmembrane segment spans residues 337-357 (LLLLMLARCQIPMILVSGVIV). The Extracellular portion of the chain corresponds to 358 to 387 (PISMKTFTVMIKGAYTMLTLLNEIRKTSLE).

The protein belongs to the insect chemoreceptor superfamily. Heteromeric odorant receptor channel (TC 1.A.69) family. Or2a subfamily. Interacts with Orco. Complexes exist early in the endomembrane system in olfactory sensory neurons (OSNs), coupling these complexes to the conserved ciliary trafficking pathway. As to expression, expressed in ai2A olfactory sensory neurons in the antenna.

The protein resides in the cell membrane. Its function is as follows. Odorant receptor which mediates acceptance or avoidance behavior, depending on its substrates. The odorant receptor repertoire encodes a large collection of odor stimuli that vary widely in identity, intensity, and duration. May form a complex with Orco to form odorant-sensing units, providing sensitive and prolonged odorant signaling and calcium permeability. Involved in the preference for citrus fruits for oviposition, especially through the response to valencene, the primary ligand of Or19a. Larvae growing on citrus fruits suffer a reduced risk of parasitism since endoparasitoid wasps that parasitize larvae are strongly repelled by the smell of citrus, as well as by valencene. The chain is Odorant receptor 19a (Or19a) from Drosophila melanogaster (Fruit fly).